We begin with the raw amino-acid sequence, 82 residues long: uncharacterized protein (82 aa).

2 consecutive transmembrane segments (helical) span residues 29 to 49 (LMNA…GIII) and 55 to 75 (WSLP…LTFF).

It is found in the cell membrane. This is an uncharacterized protein from Escherichia coli (strain K12).